The sequence spans 360 residues: Peptide chain release factor 1 (360 aa).

Residue glutamine 235 is modified to N5-methylglutamine. Residues 281 to 310 are disordered; it reads AERQRQDAAQAESRRLQVGSGDRSQRIRTY.

Belongs to the prokaryotic/mitochondrial release factor family. Methylated by PrmC. Methylation increases the termination efficiency of RF1.

Its subcellular location is the cytoplasm. Functionally, peptide chain release factor 1 directs the termination of translation in response to the peptide chain termination codons UAG and UAA. In Stenotrophomonas maltophilia (strain R551-3), this protein is Peptide chain release factor 1.